The sequence spans 89 residues: Small ribosomal subunit protein uS15 (89 aa).

It belongs to the universal ribosomal protein uS15 family. In terms of assembly, part of the 30S ribosomal subunit. Forms a bridge to the 50S subunit in the 70S ribosome, contacting the 23S rRNA.

Functionally, one of the primary rRNA binding proteins, it binds directly to 16S rRNA where it helps nucleate assembly of the platform of the 30S subunit by binding and bridging several RNA helices of the 16S rRNA. Forms an intersubunit bridge (bridge B4) with the 23S rRNA of the 50S subunit in the ribosome. The polypeptide is Small ribosomal subunit protein uS15 (Streptococcus agalactiae serotype Ia (strain ATCC 27591 / A909 / CDC SS700)).